Here is a 336-residue protein sequence, read N- to C-terminus: Biotin synthase (336 aa).

Residues 54–281 (NAIQLSTLLS…KAMVRLSAGR (228 aa)) form the Radical SAM core domain. [4Fe-4S] cluster contacts are provided by C69, C73, and C76. The [2Fe-2S] cluster site is built by C113, C144, C204, and R276.

This sequence belongs to the radical SAM superfamily. Biotin synthase family. Homodimer. Requires [4Fe-4S] cluster as cofactor. It depends on [2Fe-2S] cluster as a cofactor.

The catalysed reaction is (4R,5S)-dethiobiotin + (sulfur carrier)-SH + 2 reduced [2Fe-2S]-[ferredoxin] + 2 S-adenosyl-L-methionine = (sulfur carrier)-H + biotin + 2 5'-deoxyadenosine + 2 L-methionine + 2 oxidized [2Fe-2S]-[ferredoxin]. It functions in the pathway cofactor biosynthesis; biotin biosynthesis; biotin from 7,8-diaminononanoate: step 2/2. In terms of biological role, catalyzes the conversion of dethiobiotin (DTB) to biotin by the insertion of a sulfur atom into dethiobiotin via a radical-based mechanism. The polypeptide is Biotin synthase (Burkholderia mallei (strain ATCC 23344)).